A 133-amino-acid polypeptide reads, in one-letter code: Large ribosomal subunit protein bL17 (133 aa).

Belongs to the bacterial ribosomal protein bL17 family. As to quaternary structure, part of the 50S ribosomal subunit. Contacts protein L32.

In Nitratidesulfovibrio vulgaris (strain DSM 19637 / Miyazaki F) (Desulfovibrio vulgaris), this protein is Large ribosomal subunit protein bL17.